The chain runs to 517 residues: Maturase K (517 aa).

This sequence belongs to the intron maturase 2 family. MatK subfamily.

The protein localises to the plastid. Its subcellular location is the chloroplast. Usually encoded in the trnK tRNA gene intron. Probably assists in splicing its own and other chloroplast group II introns. This is Maturase K from Dracula chimaera.